A 101-amino-acid polypeptide reads, in one-letter code: A-type ATP synthase subunit K (101 aa).

Helical transmembrane passes span 5 to 25 (WLPF…AQAP), 37 to 57 (IGAG…VGMA), and 75 to 95 (ILIF…FAVL).

It belongs to the V-ATPase proteolipid subunit family. In terms of assembly, has multiple subunits with at least A(3), B(3), C, D, E, F, H, I and proteolipid K(x). Post-translationally, the N-terminus is blocked.

The protein localises to the cell membrane. In terms of biological role, component of the A-type ATP synthase that produces ATP from ADP in the presence of a proton gradient across the membrane. In Sulfurisphaera tokodaii (strain DSM 16993 / JCM 10545 / NBRC 100140 / 7) (Sulfolobus tokodaii), this protein is A-type ATP synthase subunit K.